The following is a 527-amino-acid chain: PTS system maltose-specific EIICB component (527 aa).

The region spanning 1-418 (MMQKIQRFGS…FNIATPGREK (418 aa)) is the PTS EIIC type-1 domain. 12 consecutive transmembrane segments (helical) span residues 8 to 28 (FGSAMFVPVLLFAFAGIIVGI), 59 to 79 (GWTVFNQMPLLFAIGIPVALA), 93 to 113 (VYLTFNYFVSAILTVWGGAFG), 132 to 152 (IKTLDTNIIGAIFISSIVVFL), 173 to 193 (YIVMISFFIMIPIALAVSYIW), 200 to 220 (IGSLQSFLVASGAVGVWIYTF), 224 to 244 (ILIPTGLHHFIYTPFIYGPAV), 276 to 296 (FALHGNSKIFGIPGIALAFYV), 305 to 325 (LVAGLLIPVTLTAIVAGITEP), 326 to 346 (IEFTFLFISPFLFAVHAVLAA), 357 to 377 (VVGNMGGGLIEAVTLNWIPLF), and 382 to 402 (MTYVYQILIGLSFTAIYFFVF). Residues 449 to 527 (DDTAFLYIEA…RERVEKILNQ (79 aa)) form the PTS EIIB type-1 domain. Cys471 functions as the Phosphocysteine intermediate; for EIIB activity in the catalytic mechanism.

The protein localises to the cell membrane. The catalysed reaction is D-maltose(out) + N(pros)-phospho-L-histidyl-[protein] = alpha-maltose 6'-phosphate(in) + L-histidyl-[protein]. Functionally, the phosphoenolpyruvate-dependent sugar phosphotransferase system (sugar PTS), a major carbohydrate active transport system, catalyzes the phosphorylation of incoming sugar substrates concomitantly with their translocation across the cell membrane. This system is involved in maltose transport. The polypeptide is PTS system maltose-specific EIICB component (Bacillus subtilis (strain 168)).